The following is a 289-amino-acid chain: Pantothenate synthetase (289 aa).

28–35 is a binding site for ATP; that stretch reads MGCLHEGH. Catalysis depends on His35, which acts as the Proton donor. Gln59 contributes to the (R)-pantoate binding site. Position 59 (Gln59) interacts with beta-alanine. 147–150 contacts ATP; it reads GLKD. Gln153 contributes to the (R)-pantoate binding site. ATP-binding positions include Val176 and 184 to 187; that span reads MSSR.

It belongs to the pantothenate synthetase family. Homodimer.

Its subcellular location is the cytoplasm. It carries out the reaction (R)-pantoate + beta-alanine + ATP = (R)-pantothenate + AMP + diphosphate + H(+). It functions in the pathway cofactor biosynthesis; (R)-pantothenate biosynthesis; (R)-pantothenate from (R)-pantoate and beta-alanine: step 1/1. In terms of biological role, catalyzes the condensation of pantoate with beta-alanine in an ATP-dependent reaction via a pantoyl-adenylate intermediate. The protein is Pantothenate synthetase of Magnetococcus marinus (strain ATCC BAA-1437 / JCM 17883 / MC-1).